The sequence spans 329 residues: PDZ and LIM domain protein 1 (329 aa).

Residue Thr2 is modified to N-acetylthreonine. In terms of domain architecture, PDZ spans 3–85 (TQQIDLQGPG…NLTLTVARSE (83 aa)). A phosphoserine mark is found at Ser90 and Ser130. Tyr144 bears the Phosphotyrosine mark. Residues 258–317 (PMCDKCGTGIVGVFVKLRDRHRHPECYVCTDCGTNLKQKGHFFVEDQIYCEKHARERVTP) form the LIM zinc-binding domain. The Zn(2+) site is built by Cys260, Cys263, His280, Cys283, Cys286, Cys289, Cys307, and His310. A Phosphothreonine modification is found at Thr316. The residue at position 321 (Tyr321) is a Phosphotyrosine.

Interacts with ACTN1, ACTN2 and ACTN4. Interacts with PDLIM4. In terms of tissue distribution, strongly expressed in the heart and skeletal muscle, moderately expressed in the spleen, small intestine, colon, placenta, and lung. A lower level expression is seen in liver, thymus, kidney, prostate and pancreas and is not found in the brain, testis, ovary, and peripheral blood leukocytes.

The protein resides in the cytoplasm. The protein localises to the cytoskeleton. Its subcellular location is the myofibril. It is found in the sarcomere. It localises to the z line. Its function is as follows. Cytoskeletal protein that may act as an adapter that brings other proteins (like kinases) to the cytoskeleton. Involved in assembly, disassembly and directioning of stress fibers in fibroblasts. Required for the localization of ACTN1 and PALLD to stress fibers. Required for cell migration and in maintaining cell polarity of fibroblasts. This chain is PDZ and LIM domain protein 1 (PDLIM1), found in Homo sapiens (Human).